Consider the following 360-residue polypeptide: Protein Wnt-2 (360 aa).

The N-terminal stretch at 1–25 (MNSPLRGIWLWLPLLLTWLTPEVSS) is a signal peptide. 11 disulfides stabilise this stretch: Cys76–Cys87, Cys127–Cys135, Cys137–Cys157, Cys206–Cys220, Cys208–Cys215, Cys278–Cys309, Cys294–Cys304, Cys308–Cys348, Cys324–Cys339, Cys326–Cys336, and Cys331–Cys332. Ser212 carries the O-palmitoleoyl serine; by PORCN lipid modification. N-linked (GlcNAc...) asparagine glycosylation is present at Asn295.

Belongs to the Wnt family. Post-translationally, palmitoleoylation is required for efficient binding to frizzled receptors. Depalmitoleoylation leads to Wnt signaling pathway inhibition.

Its subcellular location is the secreted. It localises to the extracellular space. It is found in the extracellular matrix. Functionally, ligand for members of the frizzled family of seven transmembrane receptors. Probable developmental protein. May be a signaling molecule which affects the development of discrete regions of tissues. Is likely to signal over only few cell diameters. The sequence is that of Protein Wnt-2 (WNT2) from Ateles geoffroyi (Black-handed spider monkey).